Consider the following 98-residue polypeptide: Co-chaperonin GroES (98 aa).

This sequence belongs to the GroES chaperonin family. As to quaternary structure, heptamer of 7 subunits arranged in a ring. Interacts with the chaperonin GroEL.

It is found in the cytoplasm. Functionally, together with the chaperonin GroEL, plays an essential role in assisting protein folding. The GroEL-GroES system forms a nano-cage that allows encapsulation of the non-native substrate proteins and provides a physical environment optimized to promote and accelerate protein folding. GroES binds to the apical surface of the GroEL ring, thereby capping the opening of the GroEL channel. This is Co-chaperonin GroES from Corynebacterium diphtheriae (strain ATCC 700971 / NCTC 13129 / Biotype gravis).